The primary structure comprises 402 residues: MAT+ sexual cell fertilization-promoting factor (402 aa).

Positions isoleucine 169–arginine 237 form a DNA-binding region, HMG box. The interval isoleucine 246–proline 272 is disordered.

The protein localises to the nucleus. Controls fertilization, probably by determining the mating type. In Podospora anserina (Pleurage anserina), this protein is MAT+ sexual cell fertilization-promoting factor (FPR1).